The sequence spans 154 residues: Myoglobin (154 aa).

The Globin domain occupies 2 to 148 (GLSDGEWQLV…FRNDMAAKYK (147 aa)). Ser-4 carries the post-translational modification Phosphoserine. His-65 contacts nitrite. His-65 lines the O2 pocket. Thr-68 is modified (phosphothreonine). Heme b is bound at residue His-94.

Belongs to the globin family. As to quaternary structure, monomeric.

Its subcellular location is the cytoplasm. It is found in the sarcoplasm. The catalysed reaction is Fe(III)-heme b-[protein] + nitric oxide + H2O = Fe(II)-heme b-[protein] + nitrite + 2 H(+). It catalyses the reaction H2O2 + AH2 = A + 2 H2O. Functionally, monomeric heme protein which primary function is to store oxygen and facilitate its diffusion within muscle tissues. Reversibly binds oxygen through a pentacoordinated heme iron and enables its timely and efficient release as needed during periods of heightened demand. Depending on the oxidative conditions of tissues and cells, and in addition to its ability to bind oxygen, it also has a nitrite reductase activity whereby it regulates the production of bioactive nitric oxide. Under stress conditions, like hypoxia and anoxia, it also protects cells against reactive oxygen species thanks to its pseudoperoxidase activity. The protein is Myoglobin (MB) of Ochotona princeps (Southern American pika).